Here is a 615-residue protein sequence, read N- to C-terminus: Elongation factor 4 (615 aa).

In terms of domain architecture, tr-type G spans 14-200; the sequence is SRIRNFCIIA…KVVELIPAPS (187 aa). GTP is bound by residues 26–31 and 147–150; these read DHGKST and NKID.

It belongs to the TRAFAC class translation factor GTPase superfamily. Classic translation factor GTPase family. LepA subfamily.

The protein localises to the cell membrane. The catalysed reaction is GTP + H2O = GDP + phosphate + H(+). In terms of biological role, required for accurate and efficient protein synthesis under certain stress conditions. May act as a fidelity factor of the translation reaction, by catalyzing a one-codon backward translocation of tRNAs on improperly translocated ribosomes. Back-translocation proceeds from a post-translocation (POST) complex to a pre-translocation (PRE) complex, thus giving elongation factor G a second chance to translocate the tRNAs correctly. Binds to ribosomes in a GTP-dependent manner. The sequence is that of Elongation factor 4 from Corynebacterium efficiens (strain DSM 44549 / YS-314 / AJ 12310 / JCM 11189 / NBRC 100395).